We begin with the raw amino-acid sequence, 89 residues long: MLNIGFGNRVAAHRVVAIVTPNTSPMKRLKDEAKKAGRLVDATCGRKTRAILVMDSNHVILSAIQADTLAQRYAAVKEKKEEGTHNEPE.

Belongs to the RemA family.

The sequence is that of Putative regulatory protein Dalk_1931 from Desulfatibacillum aliphaticivorans.